A 251-amino-acid chain; its full sequence is CDP-diacylglycerol pyrophosphatase (251 aa).

The chain crosses the membrane as a helical span at residues 4 to 24 (AGLLFLVMIVIAVVAAGIGYW).

The protein belongs to the Cdh family.

It is found in the cell inner membrane. It catalyses the reaction a CDP-1,2-diacyl-sn-glycerol + H2O = a 1,2-diacyl-sn-glycero-3-phosphate + CMP + 2 H(+). It participates in phospholipid metabolism; CDP-diacylglycerol degradation; phosphatidate from CDP-diacylglycerol: step 1/1. This is CDP-diacylglycerol pyrophosphatase from Escherichia coli O7:K1 (strain IAI39 / ExPEC).